The chain runs to 490 residues: Betaine aldehyde dehydrogenase (490 aa).

Residues threonine 26, isoleucine 27, and aspartate 93 each contribute to the K(+) site. 150-152 (GAW) provides a ligand contact to NAD(+). Lysine 162 acts as the Charge relay system in catalysis. 176-179 (KPSE) is a binding site for NAD(+). Valine 180 contributes to the K(+) binding site. 230–233 (GVAS) is a binding site for NAD(+). Position 246 (leucine 246) interacts with K(+). Residue glutamate 252 is the Proton acceptor of the active site. Residues glycine 254, cysteine 286, and glutamate 387 each contribute to the NAD(+) site. Cysteine 286 functions as the Nucleophile in the catalytic mechanism. Position 286 is a cysteine sulfenic acid (-SOH) (cysteine 286). K(+) is bound by residues lysine 457 and glycine 460. Glutamate 464 functions as the Charge relay system in the catalytic mechanism.

This sequence belongs to the aldehyde dehydrogenase family. As to quaternary structure, dimer of dimers. K(+) is required as a cofactor.

It catalyses the reaction betaine aldehyde + NAD(+) + H2O = glycine betaine + NADH + 2 H(+). Its pathway is amine and polyamine biosynthesis; betaine biosynthesis via choline pathway; betaine from betaine aldehyde: step 1/1. In terms of biological role, involved in the biosynthesis of the osmoprotectant glycine betaine. Catalyzes the irreversible oxidation of betaine aldehyde to the corresponding acid. The polypeptide is Betaine aldehyde dehydrogenase (Shigella flexneri serotype 5b (strain 8401)).